Here is a 477-residue protein sequence, read N- to C-terminus: MASATPAMSENAVLRHKAASTTGIDYESSAAVSPAESPRTSASSTSLSSLSSLDANEKKDEYAGLLDTYGNAFTPPDFSIKDIRAAIPKHCYERSTIKSYAYVLRDLLCLSTTFYLFHNFVTPENIPSNPLRFVLWSIYTVLQGLFATGLWVIGHECGHCAFSPSPFISDLTGWVIHSALLVPYFSWKFSHSAHHKGIGNMERDMVFLPRTREQQATRLGRAVEELGDLCEETPIYTALHLVGKQLIGWPSYLMTNATGHNFHERQREGRGKGKKNGFGGGVNHFDPRSPIFEARQAKYIVLSDIGLGLAIAALVYLGNRFGWANMAVWYFLPYLWVNHWLVAITFLQHTDPTLPHYNREEWNFVRGGACTIDRDLGFIGRHLFHGIADTHVVHHYVSRIPFYNADEASEAIKPIMGKHYRSDTAHGPVGFLHALWKTARWCQWVEPSADAQGAGKGILFYRNRNKLGTKPISMKTQ.

A disordered region spans residues 26–48 (YESSAAVSPAESPRTSASSTSLS). Over residues 27 to 48 (ESSAAVSPAESPRTSASSTSLS) the composition is skewed to low complexity. 2 helical membrane-spanning segments follow: residues 101-118 (AYVL…YLFH) and 133-153 (FVLW…LWVI). The Histidine box-1 signature appears at 155 to 159 (HECGH). Residues 167–187 (FISDLTGWVIHSALLVPYFSW) traverse the membrane as a helical segment. The Histidine box-2 signature appears at 191 to 195 (HSAHH). 3 helical membrane passes run 234–254 (PIYT…SYLM), 299–319 (YIVL…YLGN), and 327–347 (AVWY…ITFL).

It belongs to the fatty acid desaturase type 1 family.

It is found in the microsome membrane. The catalysed reaction is (9Z)-octadecenoate + AH2 + O2 = (12R)-hydroxy-(9Z)-octadecenoate + A + H2O. It participates in lipid metabolism; monounsaturated fatty acid biosynthesis. Functionally, oleate hydroxylase involved in the biosynthesis of ricinoleate (12-hydroxy-cis-9-octadecenoate), that is present at high levels in C.purpurea sclerotium tissue. Exhibits delta(12) hydroxylase activity on 16C and 18C monounsaturated fatty acids (i.e. oleic and palmitoleic acids), and, to a lower extent, gamma(3) hydroxylase activity on ricinoleate. The protein is Oleate hydroxylase FAH12 of Claviceps purpurea (Ergot fungus).